A 303-amino-acid chain; its full sequence is Secreted mono- and diacylglycerol lipase LIP4 (303 aa).

Positions M1 to C16 are cleaved as a signal peptide. C54 and C293 are disulfide-bonded. The active-site Nucleophile is S167. Residue D224 is part of the active site.

The protein belongs to the AB hydrolase superfamily. Lipase family. Class 3 subfamily.

It is found in the secreted. The catalysed reaction is a monoacylglycerol + H2O = glycerol + a fatty acid + H(+). It carries out the reaction a diacylglycerol + H2O = a monoacylglycerol + a fatty acid + H(+). Secreted lipase involved in Dandruff and seborrheic dermatitis (D/SD) probably via lipase-mediated breakdown of sebaceous lipids and release of irritating free fatty acids. Shows activity against monoglyceride and diglyceride substrates. Due to an absence of fatty acid synthase genes in Malassezia species, secretory lipases are essential for the yeast to generate free fatty acids from degradation of sebum and assimilate them as lipid sources for growth. Plays an essential role at the pathogen-host interface during disease progression. The protein is Secreted mono- and diacylglycerol lipase LIP4 of Malassezia restricta (strain ATCC 96810 / NBRC 103918 / CBS 7877) (Seborrheic dermatitis infection agent).